The following is a 234-amino-acid chain: Peroxiredoxin-2E, chloroplastic (234 aa).

The transit peptide at 1–70 (MATSLSVSRF…TRSFATTPVT (70 aa)) directs the protein to the chloroplast. The Thioredoxin domain occupies 73–234 (ISVGDKLPDS…SSAEDMLKAL (162 aa)). Ser82 carries the phosphoserine modification. Cys121 serves as the catalytic Cysteine sulfenic acid (-SOH) intermediate.

Belongs to the peroxiredoxin family. Prx5 subfamily. As to quaternary structure, monomer. Expressed in all tissues but predominantly in buds, siliques and seeds.

The protein resides in the plastid. It localises to the chloroplast stroma. The catalysed reaction is [glutaredoxin]-dithiol + a hydroperoxide = [glutaredoxin]-disulfide + an alcohol + H2O. Its function is as follows. Thiol-specific peroxidase that catalyzes the reduction of hydrogen peroxide and organic hydroperoxides to water and alcohols, respectively. Plays a role in cell protection against oxidative stress by detoxifying peroxides. May be involved in chloroplast redox homeostasis. This Arabidopsis thaliana (Mouse-ear cress) protein is Peroxiredoxin-2E, chloroplastic (PRXIIE).